A 607-amino-acid polypeptide reads, in one-letter code: Hemagglutinin glycoprotein (607 aa).

Over 1-37 (MLSYQDKAGAFYKDNARANSTKLSLVTEEHGGRRPPY) the chain is Intravirion. The helical transmembrane segment at 38 to 58 (LLFVLLVLLVGILALLAITGV) threads the bilayer. Over 59–607 (RFHQVSTSNM…IRFSCNRSNP (549 aa)) the chain is Virion surface. 6 N-linked (GlcNAc...) asparagine; by host glycosylation sites follow: N149, N391, N422, N456, N587, and N603.

It belongs to the paramyxoviruses hemagglutinin-neuraminidase family. Non-sialidase subfamily. As to quaternary structure, binds canine SLAMF1 at the cell surface.

The protein localises to the virion membrane. It is found in the host cell membrane. Attaches the virus to cell receptors and thereby initiating infection. Binding of H protein to the receptor induces a conformational change that allows the F protein to trigger virion/cell membranes fusion. The cellular receptor might be SLAM, and may explain the lymphotropism of the virus. The sequence is that of Hemagglutinin glycoprotein (H) from Ailuropoda melanoleuca (Giant panda).